Consider the following 336-residue polypeptide: Structure-specific endonuclease subunit SLX1 (336 aa).

The region spanning 21–104 (SFYGVYLLQS…QHCHETRHIK (84 aa)) is the GIY-YIG domain. The tract at residues 37–57 (FYIGSTPDPPRRLRQHNGDLK) is disordered. Residues 214–290 (CALCLEPIEQ…PATVNRCCSC (77 aa)) form an SLX1-type zinc finger.

This sequence belongs to the SLX1 family. As to quaternary structure, forms a heterodimer with SLX4. A divalent metal cation is required as a cofactor.

It is found in the nucleus. Catalytic subunit of the SLX1-SLX4 structure-specific endonuclease that resolves DNA secondary structures generated during DNA repair and recombination. Has endonuclease activity towards branched DNA substrates, introducing single-strand cuts in duplex DNA close to junctions with ss-DNA. This Scheffersomyces stipitis (strain ATCC 58785 / CBS 6054 / NBRC 10063 / NRRL Y-11545) (Yeast) protein is Structure-specific endonuclease subunit SLX1.